We begin with the raw amino-acid sequence, 209 residues long: Redox-sensing transcriptional repressor Rex (209 aa).

Positions 16–55 (LYYRFIQNLSLSGKQRVSSAELSEAVKVDSATIRRDFSYF) form a DNA-binding region, H-T-H motif. Position 90-95 (90-95 (GVGNLG)) interacts with NAD(+).

Belongs to the transcriptional regulatory Rex family. As to quaternary structure, homodimer.

The protein resides in the cytoplasm. Functionally, modulates transcription in response to changes in cellular NADH/NAD(+) redox state. This is Redox-sensing transcriptional repressor Rex from Bacillus cereus (strain Q1).